The primary structure comprises 273 residues: MPELPEVETSLRGVEPYLHGKIIKQIVVRTQKLRWAVSDELQHMQGAKIVALSRRAKYLILHTTQGDILIHLGMSGSLGILQENQQPAGKHDHVDLITQDGMVLRYNDPRKFGCWLWTKNAEQHELITRLGPEPLSESFTAAYLFARSRNKTVAVKNFIMNNDIVVGVGNIYACESLFMAELHPELAAQNLTEKQCERLVKVIKEVLAKAIIQGGTTLKDFIQPDGKPGYFAQVLQVYGRKDEACNDCGTIIEAKVIGQRNSYFCPHCQMLPR.

The active-site Schiff-base intermediate with DNA is Pro-2. The Proton donor role is filled by Glu-3. Residue Lys-57 is the Proton donor; for beta-elimination activity of the active site. DNA is bound by residues His-91, Arg-110, and Lys-151. An FPG-type zinc finger spans residues 236–270; the sequence is QVYGRKDEACNDCGTIIEAKVIGQRNSYFCPHCQM. Arg-260 acts as the Proton donor; for delta-elimination activity in catalysis.

This sequence belongs to the FPG family. In terms of assembly, monomer. Zn(2+) serves as cofactor.

It carries out the reaction Hydrolysis of DNA containing ring-opened 7-methylguanine residues, releasing 2,6-diamino-4-hydroxy-5-(N-methyl)formamidopyrimidine.. The catalysed reaction is 2'-deoxyribonucleotide-(2'-deoxyribose 5'-phosphate)-2'-deoxyribonucleotide-DNA = a 3'-end 2'-deoxyribonucleotide-(2,3-dehydro-2,3-deoxyribose 5'-phosphate)-DNA + a 5'-end 5'-phospho-2'-deoxyribonucleoside-DNA + H(+). In terms of biological role, involved in base excision repair of DNA damaged by oxidation or by mutagenic agents. Acts as a DNA glycosylase that recognizes and removes damaged bases. Has a preference for oxidized purines, such as 7,8-dihydro-8-oxoguanine (8-oxoG). Has AP (apurinic/apyrimidinic) lyase activity and introduces nicks in the DNA strand. Cleaves the DNA backbone by beta-delta elimination to generate a single-strand break at the site of the removed base with both 3'- and 5'-phosphates. The chain is Formamidopyrimidine-DNA glycosylase from Actinobacillus pleuropneumoniae serotype 5b (strain L20).